Reading from the N-terminus, the 30-residue chain is Cycloviolacin-O7 (30 aa).

A cross-link (cyclopeptide (Ser-Asn)) is located at residues 1-30; the sequence is SIPCGESCVWIPCTITALAGCKCKSKVCYN. 3 disulfide bridges follow: C4–C21, C8–C23, and C13–C28.

Post-translationally, this is a cyclic peptide.

In terms of biological role, probably participates in a plant defense mechanism. This is Cycloviolacin-O7 from Viola odorata (Sweet violet).